The chain runs to 80 residues: Gamma-conotoxin-like Am6.6 (80 aa).

Residues 1–19 form the signal peptide; that stretch reads MEKLTILLLVAAILMSTQA. The propeptide occupies 20–45; it reads LNQEQRQQAKINLLSKKKPSAERWRR. 3 cysteine pairs are disulfide-bonded: Cys47–Cys61, Cys54–Cys65, and Cys60–Cys70. 2 positions are modified to 4-carboxyglutamate: Glu56 and Glu59. Glu71 carries the post-translational modification 4-carboxyglutamate. At Pro76 the chain carries 4-hydroxyproline. Residues 78-80 constitute a propeptide that is removed on maturation; that stretch reads RAI.

It belongs to the conotoxin O2 family. In terms of tissue distribution, expressed by the venom duct.

It is found in the secreted. Gamma-conotoxins may act on voltage-gated non-specific cation pacemaker channels (HCN). This is Gamma-conotoxin-like Am6.6 from Conus amadis (Amadis cone).